A 199-amino-acid polypeptide reads, in one-letter code: Nitrile hydratase subunit alpha (199 aa).

Fe(3+) contacts are provided by C102, C105, S106, and C107. Position 105 is a cysteine sulfinic acid (-SO2H) (C105). C107 carries the cysteine sulfenic acid (-SOH) modification.

It belongs to the nitrile hydratase subunit alpha family. Heterodimer of an alpha and a beta chain. Requires Fe(3+) as cofactor. Oxidation on Cys-105 is essential for the activity. Post-translationally, oxidation on Cys-107 stabilizes the Fe-NO ligand coordinated in the inactive form.

It carries out the reaction an aliphatic primary amide = an aliphatic nitrile + H2O. Inactivated by oxidation of Cys-107 to a sulfenic acid. In terms of biological role, NHase catalyzes the hydration of various nitrile compounds to the corresponding amides. Industrial production of acrylamide is now being developed using some of the enzymes of this class. The protein is Nitrile hydratase subunit alpha (nthA) of Rhodococcus sp.